Consider the following 243-residue polypeptide: Interleukin-27 subunit alpha (243 aa).

Positions 1 to 28 are cleaved as a signal peptide; that stretch reads MGQTAGDLGWRLSLLLLPLLLVQAGVWG.

It belongs to the IL-6 superfamily. As to quaternary structure, heterodimer with EBI3; not disulfide-linked. This heterodimer is known as interleukin IL-27. In terms of processing, O-glycosylated. In terms of tissue distribution, expressed in monocytes and in placenta.

It is found in the secreted. Associates with EBI3 to form the IL-27 interleukin, a heterodimeric cytokine which functions in innate immunity. IL-27 has pro- and anti-inflammatory properties, that can regulate T-helper cell development, suppress T-cell proliferation, stimulate cytotoxic T-cell activity, induce isotype switching in B-cells, and that has diverse effects on innate immune cells. Among its target cells are CD4 T-helper cells which can differentiate in type 1 effector cells (TH1), type 2 effector cells (TH2) and IL17 producing helper T-cells (TH17). It drives rapid clonal expansion of naive but not memory CD4 T-cells. It also strongly synergizes with IL-12 to trigger interferon-gamma/IFN-gamma production of naive CD4 T-cells, binds to the cytokine receptor WSX-1/TCCR which appears to be required but not sufficient for IL-27-mediated signal transduction. IL-27 potentiate the early phase of TH1 response and suppress TH2 and TH17 differentiation. It induces the differentiation of TH1 cells via two distinct pathways, p38 MAPK/TBX21- and ICAM1/ITGAL/ERK-dependent pathways. It also induces STAT1, STAT3, STAT4 and STAT5 phosphorylation and activates TBX21/T-Bet via STAT1 with resulting IL12RB2 up-regulation, an event crucial to TH1 cell commitment. It suppresses the expression of GATA3, the inhibitor TH1 cells development. In CD8 T-cells, it activates STATs as well as GZMB. IL-27 reveals to be a potent inhibitor of TH17 cell development and of IL-17 production. Indeed IL27 alone is also able to inhibit the production of IL17 by CD4 and CD8 T-cells. While IL-27 suppressed the development of pro-inflammatory Th17 cells via STAT1, it inhibits the development of anti-inflammatory inducible regulatory T-cells, iTreg, independently of STAT1. IL-27 also has an effect on cytokine production, it suppresses pro-inflammatory cytokine production such as IL2, IL4, IL5 and IL6 and activates suppressors of cytokine signaling such as SOCS1 and SOCS3. Apart from suppression of cytokine production, IL-27 also antagonizes the effects of some cytokines such as IL6 through direct effects on T-cells. Another important role of IL-27 is its antitumor activity as well as its antiangiogenic activity with activation of production of antiangiogenic chemokines such as IP-10/CXCL10 and MIG/CXCL9. In vein endothelial cells, it induces IRF1/interferon regulatory factor 1 and increase the expression of MHC class II transactivator/CIITA with resulting up-regulation of major histocompatibility complex class II. IL-27 also demonstrates antiviral activity with inhibitory properties on HIV-1 replication. The chain is Interleukin-27 subunit alpha (IL27) from Homo sapiens (Human).